The chain runs to 154 residues: tRNA-splicing endonuclease (154 aa).

Residues Tyr86, His102, and Lys133 contribute to the active site.

The protein belongs to the tRNA-intron endonuclease family. Archaeal short subfamily. As to quaternary structure, homotetramer; although the tetramer contains four active sites, only two participate in the cleavage. Therefore, it should be considered as a dimer of dimers.

It carries out the reaction pretRNA = a 3'-half-tRNA molecule with a 5'-OH end + a 5'-half-tRNA molecule with a 2',3'-cyclic phosphate end + an intron with a 2',3'-cyclic phosphate and a 5'-hydroxyl terminus.. In terms of biological role, endonuclease that removes tRNA introns. Cleaves pre-tRNA at the 5'- and 3'-splice sites to release the intron. The products are an intron and two tRNA half-molecules bearing 2',3' cyclic phosphate and 5'-OH termini. Recognizes a pseudosymmetric substrate in which 2 bulged loops of 3 bases are separated by a stem of 4 bp. The chain is tRNA-splicing endonuclease from Nanoarchaeum equitans (strain Kin4-M).